A 160-amino-acid chain; its full sequence is Troponin C, skeletal muscle (160 aa).

Position 2 is an N-acetylthreonine (T2). 4 EF-hand domains span residues 15–50 (EMIA…LGQT), 51–86 (PTKE…QMKE), 91–126 (KSEE…SGEH), and 127–160 (VTDE…EGVQ). Positions 28, 30, 34, 39, 64, 66, 68, 70, 75, 104, 106, 108, 110, 115, 140, 142, 144, 146, and 151 each coordinate Ca(2+).

Belongs to the troponin C family.

Troponin is the central regulatory protein of striated muscle contraction. Tn consists of three components: Tn-I which is the inhibitor of actomyosin ATPase, Tn-T which contains the binding site for tropomyosin and Tn-C. The binding of calcium to Tn-C abolishes the inhibitory action of Tn on actin filaments. This is Troponin C, skeletal muscle (TNNC2) from Homo sapiens (Human).